Here is a 379-residue protein sequence, read N- to C-terminus: tRNA(Met) cytidine acetate ligase (379 aa).

ATP-binding positions include Ile7–His20, Gly100, Asn153, and Arg178.

It belongs to the TmcAL family.

Its subcellular location is the cytoplasm. The enzyme catalyses cytidine(34) in elongator tRNA(Met) + acetate + ATP = N(4)-acetylcytidine(34) in elongator tRNA(Met) + AMP + diphosphate. Functionally, catalyzes the formation of N(4)-acetylcytidine (ac(4)C) at the wobble position of elongator tRNA(Met), using acetate and ATP as substrates. First activates an acetate ion to form acetyladenylate (Ac-AMP) and then transfers the acetyl group to tRNA to form ac(4)C34. The chain is tRNA(Met) cytidine acetate ligase from Staphylococcus aureus (strain Mu3 / ATCC 700698).